Consider the following 275-residue polypeptide: Elongation factor Ts (275 aa).

The segment at 80–83 (TDFV) is involved in Mg(2+) ion dislocation from EF-Tu.

This sequence belongs to the EF-Ts family.

Its subcellular location is the cytoplasm. Associates with the EF-Tu.GDP complex and induces the exchange of GDP to GTP. It remains bound to the aminoacyl-tRNA.EF-Tu.GTP complex up to the GTP hydrolysis stage on the ribosome. In Clavibacter sepedonicus (Clavibacter michiganensis subsp. sepedonicus), this protein is Elongation factor Ts.